A 225-amino-acid chain; its full sequence is pH-response regulator palI/RIM9 homolog 2 (225 aa).

Residues 1–4 (MLVK) lie on the Cytoplasmic side of the membrane. The helical transmembrane segment at 5-25 (IVLVVLLTLALVFECFSTISV) threads the bilayer. At 26-87 (PITIGLYISE…PNHAKYALSN (62 aa)) the chain is on the extracellular side. Residues 88 to 108 (LLLVHVLAFVCVTILWVFGML) form a helical membrane-spanning segment. Residues 109–120 (TCFRCIKTSRRM) are Cytoplasmic-facing. A helical transmembrane segment spans residues 121 to 141 (LIIAVLWSMLTFMVTLLGFLI). The Extracellular portion of the chain corresponds to 142–153 (DILIFSSHVTWC). A helical transmembrane segment spans residues 154 to 174 (TWLTLASAFFTVLSGTVLCVM). Residues 175–225 (RRNLTYDKFLESKPEKHGVYVPLCRLNDVEELEIPWCNTMNHQALTAPTPM) lie on the Cytoplasmic side of the membrane.

Belongs to the palI/RIM9 family.

It is found in the cell membrane. Its function is as follows. Required for the proteolytic cleavage of the transcription factor RIM101 in response to alkaline ambient pH. The chain is pH-response regulator palI/RIM9 homolog 2 from Kluyveromyces lactis (strain ATCC 8585 / CBS 2359 / DSM 70799 / NBRC 1267 / NRRL Y-1140 / WM37) (Yeast).